The primary structure comprises 392 residues: Glyceraldehyde-3-phosphate dehydrogenase A, chloroplastic (392 aa).

The N-terminal 56 residues, 1-56 (NSSLQVSNKGFSEFSGLRTSSAIPFGRKTNDDLLSVVAFQTSVIGGGNSKRGVVEA), are a transit peptide targeting the chloroplast. Residues 67 to 68 (RI), aspartate 91, and arginine 136 each bind NADP(+). Residues 208–210 (SCT), threonine 239, arginine 254, 267–268 (TG), and arginine 290 contribute to the D-glyceraldehyde 3-phosphate site. The active-site Nucleophile is cysteine 209. Asparagine 372 is a binding site for NADP(+).

It belongs to the glyceraldehyde-3-phosphate dehydrogenase family. As to quaternary structure, tetramer of either four A chains (GAPDH 2) or two A and two B chains (GAPDH 1).

The protein resides in the plastid. Its subcellular location is the chloroplast. It catalyses the reaction D-glyceraldehyde 3-phosphate + phosphate + NADP(+) = (2R)-3-phospho-glyceroyl phosphate + NADPH + H(+). Its pathway is carbohydrate biosynthesis; Calvin cycle. In Nicotiana tabacum (Common tobacco), this protein is Glyceraldehyde-3-phosphate dehydrogenase A, chloroplastic (GAPA).